Consider the following 297-residue polypeptide: Probable endonuclease 4 (297 aa).

Zn(2+) is bound by residues H69, H110, E145, D179, H182, H214, D227, H229, and E259.

The protein belongs to the AP endonuclease 2 family. The cofactor is Zn(2+).

It carries out the reaction Endonucleolytic cleavage to 5'-phosphooligonucleotide end-products.. Its function is as follows. Endonuclease IV plays a role in DNA repair. It cleaves phosphodiester bonds at apurinic or apyrimidinic (AP) sites, generating a 3'-hydroxyl group and a 5'-terminal sugar phosphate. In Bacillus subtilis (strain 168), this protein is Probable endonuclease 4.